Reading from the N-terminus, the 299-residue chain is F-actin-capping protein subunit alpha-3 (299 aa).

A phosphoserine mark is found at Ser2 and Ser290.

This sequence belongs to the F-actin-capping protein alpha subunit family. In terms of assembly, component of the F-actin capping complex, composed of a heterodimer of an alpha and a beta subunit. Component of the WASH complex, composed of F-actin-capping protein subunit alpha (CAPZA1, CAPZA2 or CAPZA3), F-actin-capping protein subunit beta (CAPZB), WASHC1, WASHC2, WASHC3, WASHC4 and WASHC5. As to expression, exclusively expressed in the testis.

It localises to the cytoplasm. The protein localises to the cytoskeleton. F-actin-capping proteins bind in a Ca(2+)-independent manner to the fast growing ends of actin filaments (barbed end) thereby blocking the exchange of subunits at these ends. Unlike other capping proteins (such as gelsolin and severin), these proteins do not sever actin filaments. May play a role in the morphogenesis of spermatid. This Mus musculus (Mouse) protein is F-actin-capping protein subunit alpha-3 (Capza3).